Reading from the N-terminus, the 577-residue chain is Acyl-coenzyme A synthetase ACSM2B, mitochondrial (577 aa).

The transit peptide at 1-46 (MHWLRKVQGLCTLWGTQMSSRTLYINSRQLVSLQWGHQEVPAKFNF) directs the protein to the mitochondrion. Q139 serves as a coordination point for CoA. Residues 221 to 229 (TSGTSGLPK), 359 to 364 (EFYGQT), D446, and R461 each bind ATP. Residue T364 participates in substrate binding. 469 to 471 (SGY) is a CoA binding site. R472 is a binding site for substrate. Residue R501 coordinates CoA. S513 is subject to Phosphoserine. Residues K532 and 540 to 542 (YPR) contribute to the CoA site. K557 lines the ATP pocket.

It belongs to the ATP-dependent AMP-binding enzyme family. As to quaternary structure, monomer. Mg(2+) is required as a cofactor. Mn(2+) serves as cofactor. As to expression, detected in liver.

It localises to the mitochondrion. It carries out the reaction a medium-chain fatty acid + ATP + CoA = a medium-chain fatty acyl-CoA + AMP + diphosphate. The enzyme catalyses benzoate + ATP + CoA = benzoyl-CoA + AMP + diphosphate. The catalysed reaction is hexanoate + ATP + CoA = hexanoyl-CoA + AMP + diphosphate. It catalyses the reaction butanoate + ATP + CoA = butanoyl-CoA + AMP + diphosphate. It carries out the reaction octanoate + ATP + CoA = octanoyl-CoA + AMP + diphosphate. The enzyme catalyses decanoate + ATP + CoA = decanoyl-CoA + AMP + diphosphate. With respect to regulation, activated by monovalent cations, such as potassium, rubidium or ammonium. Its function is as follows. Catalyzes the activation of fatty acids by CoA to produce an acyl-CoA, the first step in fatty acid metabolism. Capable of activating medium-chain fatty acids (e.g. butyric (C4) to decanoic (C10) acids), and certain carboxylate-containing xenobiotics, e.g. benzoate. The polypeptide is Acyl-coenzyme A synthetase ACSM2B, mitochondrial (ACSM2B) (Homo sapiens (Human)).